A 511-amino-acid chain; its full sequence is uncharacterized protein (511 aa).

Helical transmembrane passes span 7-27, 46-66, 80-100, 107-127, 134-154, 163-183, 200-220, 226-246, 266-286, 301-321, 329-349, 357-377, 394-414, and 437-457; these read WVISLLAVLAVGPGLMSNTAL, VNPILIGNMAFALLVPAGPLL, LPVFILGSLLIACSGDIALMA, GAATGVMLMIMIPMLVLSFPI, LLVLIGGFYGSVIIGTILGTI, WLFFIFGTLSLIGVAVSYFFL, AGILLSVFLAAASAVSFIFLQ, SGYVWIGFGVTLCLLIGLLIV, VLGLLIIAAGTITVAVSLSAF, LILLSLTLLIGVAIAAILSAL, GMLGIIGGLILVFVNFQWLHI, MFAALFIMLAAGTGLTVAAGL, TAVQFLRLFVYMGVPILIGFF, and LFFISFILSVLLVCLSFCMNA. The segment at 465-486 is disordered; that stretch reads AHKPHDKAKTAPEKPAVSAQGL.

Belongs to the major facilitator superfamily.

It is found in the cell membrane. This is an uncharacterized protein from Bacillus subtilis (strain 168).